The following is a 336-amino-acid chain: Adenosine deaminase (336 aa).

2 residues coordinate Zn(2+): His-15 and His-17. 3 residues coordinate substrate: His-17, Asp-19, and Gly-172. His-199 lines the Zn(2+) pocket. Glu-202 serves as the catalytic Proton donor. A Zn(2+)-binding site is contributed by Asp-279.

The protein belongs to the metallo-dependent hydrolases superfamily. Adenosine and AMP deaminases family. Adenosine deaminase subfamily. Zn(2+) is required as a cofactor.

The enzyme catalyses adenosine + H2O + H(+) = inosine + NH4(+). The catalysed reaction is 2'-deoxyadenosine + H2O + H(+) = 2'-deoxyinosine + NH4(+). Catalyzes the hydrolytic deamination of adenosine and 2-deoxyadenosine. The polypeptide is Adenosine deaminase (Streptococcus thermophilus (strain ATCC BAA-250 / LMG 18311)).